The primary structure comprises 196 residues: UPF0301 protein BT_1078 (196 aa).

It belongs to the UPF0301 (AlgH) family.

The sequence is that of UPF0301 protein BT_1078 from Bacteroides thetaiotaomicron (strain ATCC 29148 / DSM 2079 / JCM 5827 / CCUG 10774 / NCTC 10582 / VPI-5482 / E50).